The following is a 357-amino-acid chain: Tetraacyldisaccharide 4'-kinase (357 aa).

Residue 54–61 (TVGGAGKT) participates in ATP binding.

Belongs to the LpxK family.

The enzyme catalyses a lipid A disaccharide + ATP = a lipid IVA + ADP + H(+). The protein operates within glycolipid biosynthesis; lipid IV(A) biosynthesis; lipid IV(A) from (3R)-3-hydroxytetradecanoyl-[acyl-carrier-protein] and UDP-N-acetyl-alpha-D-glucosamine: step 6/6. Its function is as follows. Transfers the gamma-phosphate of ATP to the 4'-position of a tetraacyldisaccharide 1-phosphate intermediate (termed DS-1-P) to form tetraacyldisaccharide 1,4'-bis-phosphate (lipid IVA). This Rhizobium leguminosarum bv. trifolii (strain WSM2304) protein is Tetraacyldisaccharide 4'-kinase.